The following is a 491-amino-acid chain: Glucose-6-phosphate 1-dehydrogenase (491 aa).

NADP(+) contacts are provided by residues Arg-49, 91–92, and Lys-146; that span reads DV. Substrate contacts are provided by His-176, Lys-180, Glu-214, and Asp-233. Residue His-238 is the Proton acceptor of the active site. Residues Lys-338 and Lys-343 each contribute to the substrate site.

It belongs to the glucose-6-phosphate dehydrogenase family.

It catalyses the reaction D-glucose 6-phosphate + NADP(+) = 6-phospho-D-glucono-1,5-lactone + NADPH + H(+). The protein operates within carbohydrate degradation; pentose phosphate pathway; D-ribulose 5-phosphate from D-glucose 6-phosphate (oxidative stage): step 1/3. Catalyzes the oxidation of glucose 6-phosphate to 6-phosphogluconolactone. This chain is Glucose-6-phosphate 1-dehydrogenase, found in Buchnera aphidicola subsp. Acyrthosiphon pisum (strain APS) (Acyrthosiphon pisum symbiotic bacterium).